A 583-amino-acid polypeptide reads, in one-letter code: Transmembrane protein 108 (583 aa).

A helical membrane pass occupies residues 7–27 (ALYCQLLSFLLTLALTEALVF). Positions 31–176 (EPSPRESLQV…ATIRRPPRPP (146 aa)) are interacts with SH3GL2. 2 disordered regions span residues 71-360 (VTPT…GVFA) and 376-404 (VPSEGLPQGTSLAPQAPAHPTWASESTVS). Composition is skewed to polar residues over residues 80–93 (PSSQATAPMATTTP) and 100–122 (PTNTISTIMATASTPHSEGSLST). The segment covering 177–187 (GSSRKGAGSSP) has biased composition (low complexity). Residues 180 to 413 (RKGAGSSPRP…SQAEEKAVAT (234 aa)) form an interacts with DST (isoform 1) region. 3 stretches are compositionally biased toward polar residues: residues 251-273 (YSSSPQPQTVAATSAPSRTSWVP), 310-319 (ASGTPASQQR), and 333-357 (DGSSHSDSWLTVTPGTSRPPSTNSG). Residues 477–497 (IAWVILAISVPISSCSVLLTV) traverse the membrane as a helical segment. The interval 498 to 583 (CCLRRKKKPA…FVGNDQVSEI (86 aa)) is interaction with CYFIP2.

Interacts with DST (isoform 1). Interacts with SH3GL2. Interacts (via N-terminus) with CYFIP1 and CYFIP2; the interactions associate TMEM108 with the WAVE1 complex. In terms of processing, glycosylated.

The protein resides in the membrane. Its subcellular location is the postsynaptic density. It is found in the endosome membrane. It localises to the cell projection. The protein localises to the axon. The protein resides in the dendrite. Its subcellular location is the early endosome. Transmembrane protein required for proper cognitive functions. Involved in the development of dentate gyrus (DG) neuron circuitry, is necessary for AMPA receptors surface expression and proper excitatory postsynaptic currents of DG granule neurons. Regulates the organization and stability of the microtubule network of sensory neurons to allow axonal transport. Through the interaction with DST, mediates the docking of the dynein/dynactin motor complex to vesicle cargos for retrograde axonal transport. In hippocampal neurons, required for BDNF-dependent dendrite outgrowth. Cooperates with SH3GL2 and recruits the WAVE1 complex to facilitate actin-dependent BDNF:NTRK2 early endocytic trafficking and mediate signaling from early endosomes. The protein is Transmembrane protein 108 of Bos taurus (Bovine).